Consider the following 398-residue polypeptide: Succinate--CoA ligase [ADP-forming] subunit beta (398 aa).

The 246-residue stretch at Lys-9–Glu-254 folds into the ATP-grasp domain. Residues Lys-46, Gly-53–Gly-55, Glu-109, Ala-112, and Glu-117 contribute to the ATP site. Mg(2+) contacts are provided by Asn-209 and Asp-223. Substrate contacts are provided by residues Asn-274 and Gly-331–Met-333.

Belongs to the succinate/malate CoA ligase beta subunit family. Heterotetramer of two alpha and two beta subunits. The cofactor is Mg(2+).

The catalysed reaction is succinate + ATP + CoA = succinyl-CoA + ADP + phosphate. It carries out the reaction GTP + succinate + CoA = succinyl-CoA + GDP + phosphate. It functions in the pathway carbohydrate metabolism; tricarboxylic acid cycle; succinate from succinyl-CoA (ligase route): step 1/1. Its function is as follows. Succinyl-CoA synthetase functions in the citric acid cycle (TCA), coupling the hydrolysis of succinyl-CoA to the synthesis of either ATP or GTP and thus represents the only step of substrate-level phosphorylation in the TCA. The beta subunit provides nucleotide specificity of the enzyme and binds the substrate succinate, while the binding sites for coenzyme A and phosphate are found in the alpha subunit. This Sinorhizobium medicae (strain WSM419) (Ensifer medicae) protein is Succinate--CoA ligase [ADP-forming] subunit beta.